Consider the following 203-residue polypeptide: IMP cyclohydrolase (203 aa).

The protein belongs to the archaeal IMP cyclohydrolase family.

It carries out the reaction IMP + H2O = 5-formamido-1-(5-phospho-D-ribosyl)imidazole-4-carboxamide. It functions in the pathway purine metabolism; IMP biosynthesis via de novo pathway; IMP from 5-formamido-1-(5-phospho-D-ribosyl)imidazole-4-carboxamide: step 1/1. Functionally, catalyzes the cyclization of 5-formylamidoimidazole-4-carboxamide ribonucleotide to IMP. The protein is IMP cyclohydrolase of Methanococcus aeolicus (strain ATCC BAA-1280 / DSM 17508 / OCM 812 / Nankai-3).